Reading from the N-terminus, the 387-residue chain is Large ribosomal subunit protein uL3 (387 aa).

Position 24 is a phosphoserine (serine 24). Residue lysine 39 forms a Glycyl lysine isopeptide (Lys-Gly) (interchain with G-Cter in ubiquitin) linkage. A Phosphothreonine modification is found at threonine 103. Residue lysine 136 forms a Glycyl lysine isopeptide (Lys-Gly) (interchain with G-Cter in ubiquitin) linkage. Residue serine 156 is modified to Phosphoserine. A Pros-methylhistidine modification is found at histidine 243. Serine 297 is modified (phosphoserine).

The protein belongs to the universal ribosomal protein uL3 family. Component of the large ribosomal subunit (LSU). Mature yeast ribosomes consist of a small (40S) and a large (60S) subunit. The 40S small subunit contains 1 molecule of ribosomal RNA (18S rRNA) and 33 different proteins (encoded by 57 genes). The large 60S subunit contains 3 rRNA molecules (25S, 5.8S and 5S rRNA) and 46 different proteins (encoded by 81 genes). uL3 forms together with ES39L one of the contact sites for the signal recognition particle that targets ribosomes to the endoplasmic reticulum membrane. Methylation at His-243 by HPM1 is required for proper 60S subunit assembly and promotes translational elongation fidelity.

The protein localises to the cytoplasm. Functionally, component of the ribosome, a large ribonucleoprotein complex responsible for the synthesis of proteins in the cell. The small ribosomal subunit (SSU) binds messenger RNAs (mRNAs) and translates the encoded message by selecting cognate aminoacyl-transfer RNA (tRNA) molecules. The large subunit (LSU) contains the ribosomal catalytic site termed the peptidyl transferase center (PTC), which catalyzes the formation of peptide bonds, thereby polymerizing the amino acids delivered by tRNAs into a polypeptide chain. The nascent polypeptides leave the ribosome through a tunnel in the LSU and interact with protein factors that function in enzymatic processing, targeting, and the membrane insertion of nascent chains at the exit of the ribosomal tunnel. uL3 plays a role in coordinating processes of accommodating the aminoacyl-tRNA in the PTC. The chain is Large ribosomal subunit protein uL3 from Saccharomyces cerevisiae (strain ATCC 204508 / S288c) (Baker's yeast).